A 90-amino-acid polypeptide reads, in one-letter code: DNA-directed RNA polymerase subunit omega (90 aa).

The protein belongs to the RNA polymerase subunit omega family. As to quaternary structure, the RNAP catalytic core consists of 2 alpha, 1 beta, 1 beta' and 1 omega subunit. When a sigma factor is associated with the core the holoenzyme is formed, which can initiate transcription.

The catalysed reaction is RNA(n) + a ribonucleoside 5'-triphosphate = RNA(n+1) + diphosphate. Promotes RNA polymerase assembly. Latches the N- and C-terminal regions of the beta' subunit thereby facilitating its interaction with the beta and alpha subunits. The chain is DNA-directed RNA polymerase subunit omega from Saccharophagus degradans (strain 2-40 / ATCC 43961 / DSM 17024).